We begin with the raw amino-acid sequence, 324 residues long: NADH-quinone oxidoreductase subunit H (324 aa).

The next 8 membrane-spanning stretches (helical) occupy residues 11 to 31 (ILIT…CGAF), 81 to 101 (VIFT…FAIV), 114 to 134 (IGIL…LFAG), 154 to 174 (VSYE…AGSF), 186 to 206 (LWNV…GVAV), 237 to 257 (FFVG…TLFF), 265 to 285 (LPPF…FILI), and 304 to 324 (VCLP…LYNA).

This sequence belongs to the complex I subunit 1 family. As to quaternary structure, NDH-1 is composed of 13 different subunits. Subunits NuoA, H, J, K, L, M, N constitute the membrane sector of the complex.

The protein localises to the cell inner membrane. The catalysed reaction is a quinone + NADH + 5 H(+)(in) = a quinol + NAD(+) + 4 H(+)(out). NDH-1 shuttles electrons from NADH, via FMN and iron-sulfur (Fe-S) centers, to quinones in the respiratory chain. The immediate electron acceptor for the enzyme in this species is believed to be ubiquinone. Couples the redox reaction to proton translocation (for every two electrons transferred, four hydrogen ions are translocated across the cytoplasmic membrane), and thus conserves the redox energy in a proton gradient. This subunit may bind ubiquinone. This is NADH-quinone oxidoreductase subunit H from Pectobacterium atrosepticum (strain SCRI 1043 / ATCC BAA-672) (Erwinia carotovora subsp. atroseptica).